The sequence spans 312 residues: Serine/threonine-protein phosphatase PP2A catalytic subunit (312 aa).

Mn(2+) is bound by residues D60, H62, D88, and N120. The active-site Proton donor is the H121. The Mn(2+) site is built by H170 and H244.

This sequence belongs to the PPP phosphatase family. PP-2A subfamily. Requires Mn(2+) as cofactor.

The protein resides in the cytoplasm. The catalysed reaction is O-phospho-L-seryl-[protein] + H2O = L-seryl-[protein] + phosphate. It carries out the reaction O-phospho-L-threonyl-[protein] + H2O = L-threonyl-[protein] + phosphate. The protein is Serine/threonine-protein phosphatase PP2A catalytic subunit of Nicotiana tabacum (Common tobacco).